A 207-amino-acid polypeptide reads, in one-letter code: Small heat shock protein hspG7 (207 aa).

In terms of domain architecture, sHSP spans 30–207 (KTIIDILPPM…YSNTIKININ (178 aa)). 2 stretches are compositionally biased toward low complexity: residues 84–101 (QQQQ…SSST) and 122–135 (STTS…ATTT). Positions 84 to 149 (QQQQLVIEKS…EDENKTKSSD (66 aa)) are disordered. The segment covering 136–149 (KENKEDENKTKSSD) has biased composition (basic and acidic residues).

This sequence belongs to the small heat shock protein (HSP20) family.

This Dictyostelium discoideum (Social amoeba) protein is Small heat shock protein hspG7 (hspG7).